A 209-amino-acid chain; its full sequence is Uracil phosphoribosyltransferase (209 aa).

5-phospho-alpha-D-ribose 1-diphosphate contacts are provided by residues Arg79, Arg104, and Asp131–Ser139. Uracil-binding positions include Ile194 and Gly199–Ala201. Asp200 is a 5-phospho-alpha-D-ribose 1-diphosphate binding site.

This sequence belongs to the UPRTase family. Mg(2+) is required as a cofactor.

It carries out the reaction UMP + diphosphate = 5-phospho-alpha-D-ribose 1-diphosphate + uracil. It functions in the pathway pyrimidine metabolism; UMP biosynthesis via salvage pathway; UMP from uracil: step 1/1. Allosterically activated by GTP. Functionally, catalyzes the conversion of uracil and 5-phospho-alpha-D-ribose 1-diphosphate (PRPP) to UMP and diphosphate. The chain is Uracil phosphoribosyltransferase from Geobacillus sp. (strain WCH70).